A 366-amino-acid chain; its full sequence is UDP-N-acetylglucosamine--N-acetylmuramyl-(pentapeptide) pyrophosphoryl-undecaprenol N-acetylglucosamine transferase (366 aa).

UDP-N-acetyl-alpha-D-glucosamine is bound by residues Thr10 to Gly12, Asn124, Arg166, Ser196, and Gln297.

It belongs to the glycosyltransferase 28 family. MurG subfamily.

It is found in the cell membrane. The catalysed reaction is di-trans,octa-cis-undecaprenyl diphospho-N-acetyl-alpha-D-muramoyl-L-alanyl-D-glutamyl-meso-2,6-diaminopimeloyl-D-alanyl-D-alanine + UDP-N-acetyl-alpha-D-glucosamine = di-trans,octa-cis-undecaprenyl diphospho-[N-acetyl-alpha-D-glucosaminyl-(1-&gt;4)]-N-acetyl-alpha-D-muramoyl-L-alanyl-D-glutamyl-meso-2,6-diaminopimeloyl-D-alanyl-D-alanine + UDP + H(+). The protein operates within cell wall biogenesis; peptidoglycan biosynthesis. Functionally, cell wall formation. Catalyzes the transfer of a GlcNAc subunit on undecaprenyl-pyrophosphoryl-MurNAc-pentapeptide (lipid intermediate I) to form undecaprenyl-pyrophosphoryl-MurNAc-(pentapeptide)GlcNAc (lipid intermediate II). This is UDP-N-acetylglucosamine--N-acetylmuramyl-(pentapeptide) pyrophosphoryl-undecaprenol N-acetylglucosamine transferase from Alkaliphilus metalliredigens (strain QYMF).